Here is a 211-residue protein sequence, read N- to C-terminus: PITH domain-containing protein GA19395 (211 aa).

The PITH domain maps to 20 to 192 (DHALEMGIEY…GVTICNYEAR (173 aa)).

This sequence belongs to the PITHD1 family.

This is PITH domain-containing protein GA19395 from Drosophila pseudoobscura pseudoobscura (Fruit fly).